The sequence spans 362 residues: Hydroxycarboxylate dehydrogenase A (362 aa).

Residues aspartate 173, histidine 257, and histidine 274 each coordinate Zn(2+).

Belongs to the iron-containing alcohol dehydrogenase family. Requires Zn(2+) as cofactor.

The catalysed reaction is 2-hydroxybutanoate + NADP(+) = 2-oxobutanoate + NADPH + H(+). It carries out the reaction 2-hydroxyglutarate + NADP(+) = 2-oxoglutarate + NADPH + H(+). Its function is as follows. Catalyzes the NADPH-dependent reduction of 2-oxoglutarate and 2-oxobutanoate, leading to the respective 2-hydroxycarboxylate. Cannot use NADH instead of NADPH as a redox partner. Do not catalyze the reverse reactions. The sequence is that of Hydroxycarboxylate dehydrogenase A from Escherichia coli (strain K12).